We begin with the raw amino-acid sequence, 218 residues long: Transmembrane gamma-carboxyglutamic acid protein 1 (218 aa).

A propeptide spanning residues Met-1 to Arg-20 is cleaved from the precursor. One can recognise a Gla domain in the interval Ala-21–Lys-66. The Extracellular segment spans residues Ala-21–Leu-83. Cys-37 and Cys-42 are disulfide-bonded. Residues Thr-84–Leu-106 form a helical membrane-spanning segment. Residues Arg-107–Lys-218 are Cytoplasmic-facing. A disordered region spans residues Thr-161–Glu-195.

In terms of processing, gla residues are produced after subsequent post-translational modifications of glutamate by a vitamin K-dependent gamma-carboxylase. Highly expressed in the spinal cord.

The protein localises to the membrane. The sequence is that of Transmembrane gamma-carboxyglutamic acid protein 1 (PRRG1) from Homo sapiens (Human).